A 316-amino-acid chain; its full sequence is Transaldolase 1 (316 aa).

The active-site Schiff-base intermediate with substrate is lysine 131.

The protein belongs to the transaldolase family. Type 1 subfamily. In terms of assembly, homodimer.

The protein resides in the cytoplasm. It carries out the reaction D-sedoheptulose 7-phosphate + D-glyceraldehyde 3-phosphate = D-erythrose 4-phosphate + beta-D-fructose 6-phosphate. It participates in carbohydrate degradation; pentose phosphate pathway; D-glyceraldehyde 3-phosphate and beta-D-fructose 6-phosphate from D-ribose 5-phosphate and D-xylulose 5-phosphate (non-oxidative stage): step 2/3. Functionally, transaldolase is important for the balance of metabolites in the pentose-phosphate pathway. The sequence is that of Transaldolase 1 from Pectobacterium atrosepticum (strain SCRI 1043 / ATCC BAA-672) (Erwinia carotovora subsp. atroseptica).